A 371-amino-acid chain; its full sequence is 3-isopropylmalate dehydrogenase B (371 aa).

79 to 93 (GSKVDHIRRGLDGPE) contributes to the NAD(+) binding site. Residues R100, R110, R142, and D229 each coordinate substrate. Positions 229, 254, and 258 each coordinate Mg(2+). 296 to 308 (GSAPTIAGKNIAN) is a binding site for NAD(+).

It belongs to the isocitrate and isopropylmalate dehydrogenases family. As to quaternary structure, homodimer. The cofactor is Mg(2+). Mn(2+) is required as a cofactor.

The protein localises to the cytoplasm. It carries out the reaction (2R,3S)-3-isopropylmalate + NAD(+) = 4-methyl-2-oxopentanoate + CO2 + NADH. It functions in the pathway amino-acid biosynthesis; L-leucine biosynthesis; L-leucine from 3-methyl-2-oxobutanoate: step 3/4. Its function is as follows. Catalyzes the oxidation of 3-carboxy-2-hydroxy-4-methylpentanoate (3-isopropylmalate) to 3-carboxy-4-methyl-2-oxopentanoate. The product decarboxylates to 4-methyl-2 oxopentanoate. This Aspergillus niger protein is 3-isopropylmalate dehydrogenase B (leu2B).